The chain runs to 445 residues: ATP-dependent rRNA helicase rrp3 (445 aa).

Positions 1–10 (MSKNSSRDSS) are enriched in basic and acidic residues. Residues 1–28 (MSKNSSRDSSPEEVSPDTETPSTTTAPK) are disordered. The span at 17 to 28 (DTETPSTTTAPK) shows a compositional bias: low complexity. Residues 28-56 (KTFRELGVIDSLCEACEELGYTAPTPIQE) carry the Q motif motif. The 171-residue stretch at 59–229 (IPIALEGRDL…RASLSDPVRV (171 aa)) folds into the Helicase ATP-binding domain. An ATP-binding site is contributed by 72 to 79 (AETGSGKT). A DEAD box motif is present at residues 178-181 (DEAD). The Helicase C-terminal domain occupies 240–400 (KLLQSYLFIP…EYKPEKDEVM (161 aa)). The interval 415–445 (LTMRDMQDKDNKGRGPRNRKRTRDDLDQDDG) is disordered.

The protein belongs to the DEAD box helicase family. DDX47/RRP3 subfamily. In terms of assembly, interacts with the SSU processome.

It localises to the nucleus. The catalysed reaction is ATP + H2O = ADP + phosphate + H(+). ATP-dependent rRNA helicase required for pre-ribosomal RNA processing. Involved in the maturation of the 35S-pre-rRNA and to its cleavage to mature 18S rRNA. This chain is ATP-dependent rRNA helicase rrp3, found in Aspergillus terreus (strain NIH 2624 / FGSC A1156).